We begin with the raw amino-acid sequence, 264 residues long: Putative hydro-lyase Cgl2544/cg2803 (264 aa).

This sequence belongs to the D-glutamate cyclase family.

In Corynebacterium glutamicum (strain ATCC 13032 / DSM 20300 / JCM 1318 / BCRC 11384 / CCUG 27702 / LMG 3730 / NBRC 12168 / NCIMB 10025 / NRRL B-2784 / 534), this protein is Putative hydro-lyase Cgl2544/cg2803.